We begin with the raw amino-acid sequence, 445 residues long: Histone acetyltransferase of the MYST family 2 (445 aa).

Residues 1–23 show a composition bias toward polar residues; sequence MGSSANTETNGNAPPPSSNQKPP. Positions 1–58 are disordered; the sequence is MGSSANTETNGNAPPPSSNQKPPATNGVDGSHPPPPPLTPDQAIIESDPSKKRKMGML. The Tudor-knot domain occupies 60–118; sequence LEVGTRVMCRWRDGKHHPVKVIERRRIHNGGQNDYEYYVHYTEFNRRLDEWTQLDQLDL. In terms of domain architecture, MYST-type HAT spans 169-440; that stretch reads TKVKNISTIE…VDASKLIWTP (272 aa). The C2HC MYST-type zinc finger occupies 202–227; sequence LFFCEFCLNFMKRKEQLQRHMRKCDL. The residue at position 269 (Lys-269) is an N6-acetyllysine; by autocatalysis. Residues 312-314 and 319-325 each bind acetyl-CoA; these read ILT and QRKGYGK. The Proton donor/acceptor role is filled by Glu-345. Ser-349 provides a ligand contact to acetyl-CoA.

The protein belongs to the MYST (SAS/MOZ) family. As to quaternary structure, interacts with MRG1 and MRG2. Post-translationally, autoacetylation at Lys-269 is required for proper function. As to expression, expressed in cotyledons, leaves, stems, roots and, at higher levels in developing flowers, particularly in the anthers and gynoecia. Constitutively expressed in all tissues, predominantly in shoot apical meristem.

Its subcellular location is the nucleus. The enzyme catalyses L-lysyl-[protein] + acetyl-CoA = N(6)-acetyl-L-lysyl-[protein] + CoA + H(+). In terms of biological role, histone acetyltransferase which may be involved in transcriptional activation. Acetylates 'Lys-5' of histone H4 (H4K5ac). Essential for gametophyte development. Negative regulator of flowering controlling the H4K5ac levels in the FLC chromatin. The polypeptide is Histone acetyltransferase of the MYST family 2 (Arabidopsis thaliana (Mouse-ear cress)).